The following is a 230-amino-acid chain: Flagellar L-ring protein (230 aa).

The N-terminal stretch at 1 to 15 (MSRLPSLSSLCLAIA) is a signal peptide. Cys16 carries the N-palmitoyl cysteine lipid modification. Residue Cys16 is the site of S-diacylglycerol cysteine attachment.

The protein belongs to the FlgH family. The basal body constitutes a major portion of the flagellar organelle and consists of four rings (L,P,S, and M) mounted on a central rod.

Its subcellular location is the cell outer membrane. The protein localises to the bacterial flagellum basal body. In terms of biological role, assembles around the rod to form the L-ring and probably protects the motor/basal body from shearing forces during rotation. This is Flagellar L-ring protein from Xanthomonas campestris pv. campestris (strain 8004).